A 320-amino-acid chain; its full sequence is uncharacterized protein (320 aa).

7 consecutive transmembrane segments (helical) span residues 107–127 (LSKENMLMLILSTIVAIAGIY), 131–151 (VALLIASMIIAPLLGPNIALS), 169–189 (LIAELIFVIILSMIAGHYLPI), 200–220 (ITLDFWSIIIALSAGIAGSLS), 228–248 (IAVGVMIAIALLPPLAVFGLL), 260–280 (ALILFLINMIAINLSAIVIFS), and 299–319 (TLYAILLWVTLFIAIFVLIIY).

The protein localises to the cell membrane. This is an uncharacterized protein from Methanocaldococcus jannaschii (strain ATCC 43067 / DSM 2661 / JAL-1 / JCM 10045 / NBRC 100440) (Methanococcus jannaschii).